The primary structure comprises 493 residues: 1-aminocyclopropane-1-carboxylate synthase 1 (493 aa).

Lys279 is modified (N6-(pyridoxal phosphate)lysine).

The protein belongs to the class-I pyridoxal-phosphate-dependent aminotransferase family. As to quaternary structure, homodimer. The cofactor is pyridoxal 5'-phosphate.

It catalyses the reaction S-adenosyl-L-methionine = 1-aminocyclopropane-1-carboxylate + S-methyl-5'-thioadenosine + H(+). It functions in the pathway alkene biosynthesis; ethylene biosynthesis via S-adenosyl-L-methionine; ethylene from S-adenosyl-L-methionine: step 1/2. Catalyzes the formation of 1-aminocyclopropane-1-carboxylate, a direct precursor of ethylene in higher plants. The protein is 1-aminocyclopropane-1-carboxylate synthase 1 (ACC1A) of Cucurbita pepo (Vegetable marrow).